Here is a 342-residue protein sequence, read N- to C-terminus: Epoxide hydrolase srdG (342 aa).

The AB hydrolase-1 domain maps to Ala44 to Lys332. Residue Asp122 is the Nucleophile of the active site. His320 functions as the Proton acceptor in the catalytic mechanism.

It belongs to the AB hydrolase superfamily. Epoxide hydrolase family.

Its function is as follows. Highly reducing polyketide synthase; part of the gene cluster that mediates the biosynthesis of sordarial, a salicylic aldehyde structurally related to the phytotoxin pyriculol. The most interesting aspect of this pathway is formation of an aromatic product from the highly reducing polyketide synthase srdA. SrdA synthesizes a reduced polyketide chain from one molecule of acetyl-CoA and five molecules of malonyl-CoA. The polyketide chain is then reductively released as an aldehyde. The oxidoreductases srdC, srdD and srdE then oxidize one of the hydroxy groups to facilitate the intramolecular aldol condensation, followed by dehydration to yield a salicylic aldehyde. This aldehyde can undergo facile reduction by endogenous reductases to yield the alcohol 1-hydroxy-2-hydroxymethyl-3-pent-1,3-dienylbenzene. The flavin-dependent srdI counteract against the propensity of the aldehydes to be reduced under physiological conditions and is responsible for reoxidizing 1-hydroxy-2-hydroxymethyl-3-pent-1,3-dienylbenzene back to the salicylic aldehyde. This salicylic aldehyde is then selectively epoxidized by the cupin-domain-containing oxidoreductase srdB to yield the epoxide, which can be hydrolyzed stereoselectively by the hydrolase srdG to give the final product sordarial. The polypeptide is Epoxide hydrolase srdG (Neurospora crassa (strain ATCC 24698 / 74-OR23-1A / CBS 708.71 / DSM 1257 / FGSC 987)).